Consider the following 356-residue polypeptide: tRNA N6-adenosine threonylcarbamoyltransferase (356 aa).

2 residues coordinate Fe cation: His-115 and His-119. Residues 138-142 (LVSGG), Asp-171, Gly-184, and Asn-283 contribute to the substrate site. Residue Asp-311 coordinates Fe cation.

The protein belongs to the KAE1 / TsaD family. Fe(2+) is required as a cofactor.

It is found in the cytoplasm. The enzyme catalyses L-threonylcarbamoyladenylate + adenosine(37) in tRNA = N(6)-L-threonylcarbamoyladenosine(37) in tRNA + AMP + H(+). In terms of biological role, required for the formation of a threonylcarbamoyl group on adenosine at position 37 (t(6)A37) in tRNAs that read codons beginning with adenine. Is involved in the transfer of the threonylcarbamoyl moiety of threonylcarbamoyl-AMP (TC-AMP) to the N6 group of A37, together with TsaE and TsaB. TsaD likely plays a direct catalytic role in this reaction. This Synechococcus sp. (strain WH7803) protein is tRNA N6-adenosine threonylcarbamoyltransferase.